We begin with the raw amino-acid sequence, 183 residues long: Translation initiation factor IF-3 (183 aa).

It belongs to the IF-3 family. In terms of assembly, monomer.

It is found in the cytoplasm. Functionally, IF-3 binds to the 30S ribosomal subunit and shifts the equilibrium between 70S ribosomes and their 50S and 30S subunits in favor of the free subunits, thus enhancing the availability of 30S subunits on which protein synthesis initiation begins. In Pseudomonas aeruginosa (strain ATCC 15692 / DSM 22644 / CIP 104116 / JCM 14847 / LMG 12228 / 1C / PRS 101 / PAO1), this protein is Translation initiation factor IF-3.